Consider the following 192-residue polypeptide: Ion-translocating oxidoreductase complex subunit A (192 aa).

Helical transmembrane passes span 5-25 (ILLI…FLGL), 39-59 (VGMG…AYLV), 63-83 (ILIP…VIAV), 102-122 (LLGI…VALL), 134-154 (VVYG…FAAL), and 171-191 (AIAL…TGLV).

The protein belongs to the NqrDE/RnfAE family. As to quaternary structure, the complex is composed of six subunits: RnfA, RnfB, RnfC, RnfD, RnfE and RnfG.

It is found in the cell inner membrane. Its function is as follows. Part of a membrane-bound complex that couples electron transfer with translocation of ions across the membrane. In Haemophilus influenzae (strain 86-028NP), this protein is Ion-translocating oxidoreductase complex subunit A.